A 143-amino-acid chain; its full sequence is UPF0651 protein P31B10.02, mitochondrial (143 aa).

The Oxidoreductase-like domain maps to 48 to 93 (IYDGIRVPPKPEEPLNCCQSGCAICVWDVYADDLEEYNRARRKAKR).

This sequence belongs to the UPF0651 family.

Its subcellular location is the mitochondrion. The sequence is that of UPF0651 protein P31B10.02, mitochondrial from Schizosaccharomyces pombe (strain 972 / ATCC 24843) (Fission yeast).